Here is a 571-residue protein sequence, read N- to C-terminus: Podocalyxin (571 aa).

The first 22 residues, 1–22, serve as a signal peptide directing secretion; the sequence is MRPAPPPPLLLLLLLLPPPSLS. The Extracellular portion of the chain corresponds to 23-474; sequence HDGTIIAATS…EETEDRFSMP (452 aa). Positions 94-361 are disordered; it reads NTVIAPDQDE…QGDDRIKCES (268 aa). Over residues 106-116 the composition is skewed to polar residues; sequence STNPTIATSDS. A glycan (N-linked (GlcNAc...) asparagine) is linked at Asn-123. Composition is skewed to polar residues over residues 126 to 144, 151 to 169, 176 to 203, and 218 to 245; these read ILPS…TQTA, NPGT…QTTS, KPSS…STTL, and TASS…SSVT. Residue Asn-199 is glycosylated (N-linked (GlcNAc...) asparagine). Low complexity predominate over residues 282–300; sequence TTSLPSETESLESPSSESP. Pro residues predominate over residues 301 to 311; the sequence is SQPPKLRPTGP. Low complexity predominate over residues 312–322; sequence PSSGSSGPAAS. N-linked (GlcNAc...) asparagine glycosylation is found at Asn-373 and Asn-383. Residues 475-495 traverse the membrane as a helical segment; that stretch reads LIITIVCMASFLLLVAALYGC. The Cytoplasmic segment spans residues 496–571; that stretch reads CHQRLSQRKD…DLDEEEDTHL (76 aa). A Phosphothreonine modification is found at Thr-531. Ser-550 carries the phosphoserine modification. At Thr-569 the chain carries Phosphothreonine.

This sequence belongs to the podocalyxin family. Found in a complex with EZR, PODXL and NHERF2. Associates with the actin cytoskeleton through complex formation with EZR and NHERF2. Interacts (via the C-terminal PDZ-binding motif DTHL) with NHERF1 (via the PDZ domains); interaction is not detected in glomerular epithelium cells. Interacts (via the C-terminal PDZ-binding motif DTHL) with NHERF2 (via the PDZ 1 domain); interaction is detected in glomerular epithelium cells. Interacts with EZR. Monomer; when associated with the membrane raft. Oligomer; when integrated in the apical membrane. Interacts with NHERF2. Interacts (via the C-terminal PDZ-binding motif DTHL) with NHERF1 (via the PDZ domains); the interaction take place early in the secretory pathway and is necessary for its apical membrane sorting. Post-translationally, N- and O-linked glycosylated. Sialoglycoprotein. Expressed in glomerular and tubular epithelial cells and peritubular capillaries of the kidney (at protein level). Expressed in heart, lung, renal cortex and medulla, kidney and muscle.

Its subcellular location is the apical cell membrane. The protein resides in the membrane raft. It localises to the cell projection. The protein localises to the lamellipodium. It is found in the filopodium. Its subcellular location is the ruffle. The protein resides in the microvillus. It localises to the membrane. In terms of biological role, involved in the regulation of both adhesion and cell morphology and cancer progression. Functions as an anti-adhesive molecule that maintains an open filtration pathway between neighboring foot processes in the podocyte by charge repulsion. Acts as a pro-adhesive molecule, enhancing the adherence of cells to immobilized ligands, increasing the rate of migration and cell-cell contacts in an integrin-dependent manner. Induces the formation of apical actin-dependent microvilli. Involved in the formation of a preapical plasma membrane subdomain to set up initial epithelial polarization and the apical lumen formation during renal tubulogenesis. Plays a role in cancer development and aggressiveness by inducing cell migration and invasion through its interaction with the actin-binding protein EZR. Affects EZR-dependent signaling events, leading to increased activities of the MAPK and PI3K pathways in cancer cells. This chain is Podocalyxin (PODXL), found in Canis lupus familiaris (Dog).